A 209-amino-acid chain; its full sequence is Uracil phosphoribosyltransferase (209 aa).

Residues Arg-79, Arg-104, and 131-139 (DPMLATGGS) contribute to the 5-phospho-alpha-D-ribose 1-diphosphate site. Residues Ile-194 and 199–201 (GDA) contribute to the uracil site. Asp-200 is a binding site for 5-phospho-alpha-D-ribose 1-diphosphate.

Belongs to the UPRTase family. It depends on Mg(2+) as a cofactor.

The catalysed reaction is UMP + diphosphate = 5-phospho-alpha-D-ribose 1-diphosphate + uracil. The protein operates within pyrimidine metabolism; UMP biosynthesis via salvage pathway; UMP from uracil: step 1/1. With respect to regulation, allosterically activated by GTP. In terms of biological role, catalyzes the conversion of uracil and 5-phospho-alpha-D-ribose 1-diphosphate (PRPP) to UMP and diphosphate. This Halalkalibacterium halodurans (strain ATCC BAA-125 / DSM 18197 / FERM 7344 / JCM 9153 / C-125) (Bacillus halodurans) protein is Uracil phosphoribosyltransferase.